We begin with the raw amino-acid sequence, 862 residues long: Protein SEY1 (862 aa).

The Cytoplasmic portion of the chain corresponds to 1-743 (MASNGHFSSV…KRSAIGGITQ (743 aa)). Positions 48-301 (GFNYHLISVF…IPADGFAVYA (254 aa)) constitute a GB1/RHD3-type G domain. Position 58–65 (58–65 (GSQSTGKS)) interacts with GTP. Residues 476 to 500 (SDYKQELSLFQKDLEKISSQLRKDE) adopt a coiled-coil conformation. A helical transmembrane segment spans residues 744–764 (VPLYFYGLLLALGWNEIIAVL). Residues 765 to 767 (RNP) are Lumenal-facing. The helical transmembrane segment at 768–788 (IYFIFLLLIGVGAYVTFRLNL) threads the bilayer. Over 789–862 (WGPMINMAEA…TSDDDNDDDL (74 aa)) the chain is Cytoplasmic. Residues 818–862 (SDSGRQAMAMSGRNARGTEEYEMSSNLKSKGRRTDTSDDDNDDDL) form a disordered region.

This sequence belongs to the TRAFAC class dynamin-like GTPase superfamily. GB1/RHD3 GTPase family. RHD3 subfamily.

The protein localises to the endoplasmic reticulum membrane. Functionally, cooperates with the reticulon proteins and tubule-shaping DP1 family proteins to generate and maintain the structure of the tubular endoplasmic reticulum network. Has GTPase activity, which is required for its function in ER organization. This is Protein SEY1 from Arthroderma otae (strain ATCC MYA-4605 / CBS 113480) (Microsporum canis).